We begin with the raw amino-acid sequence, 812 residues long: Collagen-like protein 5 (812 aa).

Asn13 and Asn83 each carry an N-linked (GlcNAc...) asparagine; by host glycan. Collagen-like domains are found at residues 69 to 128 (GASG…KGDD), 143 to 502 (GEKG…KGDN), and 506 to 565 (GETG…KGEA). Residues 71–568 (SGAQGVKGDP…PGIKGEAGTN (498 aa)) are disordered. Composition is skewed to basic and acidic residues over residues 88–112 (TKGE…EKGD), 121–435 (SKGD…ETGS), 444–523 (SKGD…KGIK), and 531–561 (VKGD…DPGI). A glycan (N-linked (GlcNAc...) asparagine; by host) is linked at Asn502. N-linked (GlcNAc...) asparagine; by host glycans are attached at residues Asn637, Asn658, and Asn667. The segment at 730–802 (GQARTNGAST…VSASGGRGGD (73 aa)) is disordered. Residues 752–765 (FGGGGGGASGFAKG) show a composition bias toward gly residues.

In terms of processing, may be hydroxylated on lysine by the viral-encoded procollagen-lysine,2-oxoglutarate 5-dioxygenase.

It is found in the virion. May participate in the formation of a layer of cross-linked glycosylated fibrils at the viral surface thus giving it a hairy-like appearance. This Acanthamoeba polyphaga (Amoeba) protein is Collagen-like protein 5.